Reading from the N-terminus, the 414-residue chain is NAD-specific glutamate dehydrogenase (414 aa).

Residues Lys70 and Lys94 each contribute to the substrate site. Catalysis depends on Lys106, which acts as the Proton donor. Residues Thr190 and Asn221 each coordinate NAD(+). Ser348 contributes to the substrate binding site.

This sequence belongs to the Glu/Leu/Phe/Val dehydrogenases family. Homohexamer.

It catalyses the reaction L-glutamate + NAD(+) + H2O = 2-oxoglutarate + NH4(+) + NADH + H(+). The protein is NAD-specific glutamate dehydrogenase (gluD) of Staphylococcus aureus (strain COL).